The primary structure comprises 152 residues: Cytochrome c-type biogenesis protein CcmE 2 (152 aa).

At 1–8 (MNPQRRRR) the chain is on the cytoplasmic side. A helical; Signal-anchor for type II membrane protein membrane pass occupies residues 9-29 (LWLVLALVLAGGLATTLVAMA). The Periplasmic segment spans residues 30 to 152 (LQRNVAYLYT…HQVAPAKVTQ (123 aa)). Heme-binding residues include His123 and Tyr127.

It belongs to the CcmE/CycJ family.

It is found in the cell inner membrane. In terms of biological role, heme chaperone required for the biogenesis of c-type cytochromes. Transiently binds heme delivered by CcmC and transfers the heme to apo-cytochromes in a process facilitated by CcmF and CcmH. This is Cytochrome c-type biogenesis protein CcmE 2 from Xanthomonas campestris pv. campestris (strain 8004).